The sequence spans 347 residues: NADH-ubiquinone oxidoreductase chain 2 (347 aa).

A run of 11 helical transmembrane segments spans residues 1–21 (MNPM…SIVL), 25–45 (HWFL…PVLM), 68–88 (MILV…TIMI), 96–116 (MLIT…FWVP), 122–142 (VSLS…LSLL), 145–165 (IFPS…IMIG), 178–198 (IMAY…IYNP), 201–221 (SLLN…LLII), 239–259 (IVVS…PLTG), 274–294 (SSVM…FFYM), and 326–346 (MMSL…LITL).

This sequence belongs to the complex I subunit 2 family. Core subunit of respiratory chain NADH dehydrogenase (Complex I) which is composed of 45 different subunits. Interacts with TMEM242.

Its subcellular location is the mitochondrion inner membrane. It carries out the reaction a ubiquinone + NADH + 5 H(+)(in) = a ubiquinol + NAD(+) + 4 H(+)(out). Core subunit of the mitochondrial membrane respiratory chain NADH dehydrogenase (Complex I) which catalyzes electron transfer from NADH through the respiratory chain, using ubiquinone as an electron acceptor. Essential for the catalytic activity and assembly of complex I. In Sylvisorex lunaris (Moon forest shrew), this protein is NADH-ubiquinone oxidoreductase chain 2.